A 685-amino-acid chain; its full sequence is Diphthine--ammonia ligase (685 aa).

It in the C-terminal section; belongs to the RutC family. This sequence in the N-terminal section; belongs to the Diphthine--ammonia ligase family. As to quaternary structure, interacts with elongation factor 2 (eEF-2; EFT1 or EFT2).

The protein localises to the cytoplasm. The enzyme catalyses diphthine-[translation elongation factor 2] + NH4(+) + ATP = diphthamide-[translation elongation factor 2] + AMP + diphosphate + H(+). Its pathway is protein modification; peptidyl-diphthamide biosynthesis. In terms of biological role, amidase that catalyzes the last step of diphthamide biosynthesis using ammonium and ATP. Diphthamide biosynthesis consists in the conversion of an L-histidine residue in the translation elongation factor eEF-2 (EFT1 or EFT2) to diphthamide. The polypeptide is Diphthine--ammonia ligase (DPH6) (Saccharomyces cerevisiae (strain ATCC 204508 / S288c) (Baker's yeast)).